The sequence spans 921 residues: Translation initiation factor IF-2 (921 aa).

Disordered regions lie at residues 81–118 (AVAE…AAAP), 175–194 (PVVE…ANQA), and 219–301 (VAPA…KKHE). Pro residues predominate over residues 96–112 (PAAPTPPEVPAAAPAPP). Residues 229–241 (RPSPAAGAPSRGA) are compositionally biased toward low complexity. The span at 292–301 (KKKEQPKKHE) shows a compositional bias: basic and acidic residues. The tr-type G domain maps to 421–590 (KRPPVVTIMG…LLQADLMELK (170 aa)). The interval 430 to 437 (GHVDHGKT) is G1. 430–437 (GHVDHGKT) provides a ligand contact to GTP. Residues 455 to 459 (GITQH) form a G2 region. A G3 region spans residues 476–479 (DTPG). Residues 476-480 (DTPGH) and 530-533 (NKID) each bind GTP. A G4 region spans residues 530–533 (NKID). The tract at residues 566–568 (SAK) is G5.

The protein belongs to the TRAFAC class translation factor GTPase superfamily. Classic translation factor GTPase family. IF-2 subfamily.

The protein resides in the cytoplasm. In terms of biological role, one of the essential components for the initiation of protein synthesis. Protects formylmethionyl-tRNA from spontaneous hydrolysis and promotes its binding to the 30S ribosomal subunits. Also involved in the hydrolysis of GTP during the formation of the 70S ribosomal complex. In Pelobacter propionicus (strain DSM 2379 / NBRC 103807 / OttBd1), this protein is Translation initiation factor IF-2.